Here is a 293-residue protein sequence, read N- to C-terminus: Ubiquinone biosynthesis protein COQ9-B, mitochondrial (293 aa).

The interval 21–73 (LRSDDQKQPPFSSSSTHAETPEHAEEQYQQQQSPPRYTDQAGEESEDYESEEQ) is disordered. Residues 29–38 (PPFSSSSTHA) are compositionally biased toward polar residues. Over residues 61 to 72 (AGEESEDYESEE) the composition is skewed to acidic residues. A 1,2-diacylglycero-3-phosphoethanolamine is bound at residue arginine 219.

Belongs to the COQ9 family. In terms of assembly, homodimer. Heterodimer; two heterodimers of COQ7:COQ9 come together on the same side of the lipid pseudo-bilayer and form a curved tetramer with a hydrophobic surface suitable for membrane interaction. These two tetramers assemble into a soluble octamer with a pseudo-bilayer of lipids captured within. Interacts with COQ7; this interaction allows ubiquinone (CoQ) isoprene intermediates presentation to COQ7 and facilitates the COQ7-mediated hydroxylase step.

Its subcellular location is the mitochondrion. The protein operates within cofactor biosynthesis; ubiquinone biosynthesis. Its function is as follows. Membrane-associated protein that warps the membrane surface to access and bind aromatic isoprenes with high specificity, including ubiquinone (CoQ) isoprene intermediates and presents them directly to COQ7, therefore facilitating the COQ7-mediated hydroxylase step. Participates in the biosynthesis of coenzyme Q, also named ubiquinone, an essential lipid-soluble electron transporter for aerobic cellular respiration. This chain is Ubiquinone biosynthesis protein COQ9-B, mitochondrial (coq9-b), found in Xenopus laevis (African clawed frog).